The sequence spans 74 residues: Mitochondrial import receptor subunit TOM6 homolog (74 aa).

Over residues 1–20 (MASSGVTVSAAGSASEASEV) the composition is skewed to low complexity. Residues 1-21 (MASSGVTVSAAGSASEASEVP) are disordered. Ala2 carries the post-translational modification N-acetylalanine.

Belongs to the Tom6 family. In terms of assembly, forms part of the preprotein translocase complex of the outer mitochondrial membrane (TOM complex) which consists of at least 7 different proteins (TOMM5, TOMM6, TOMM7, TOMM20, TOMM22, TOMM40 and TOMM70).

It localises to the mitochondrion outer membrane. The chain is Mitochondrial import receptor subunit TOM6 homolog (Tomm6) from Mus musculus (Mouse).